The sequence spans 263 residues: Splicing regulator sde2 (263 aa).

Residues 1 to 84 (MECKTVFLNG…LTLCTRVLGG (84 aa)) constitute a propeptide, UBL. 3 disordered regions span residues 95–118 (AGGRMSKKRNEQENQDSCRDLDGN), 137–158 (PAETRAKKEAKKQKLNKVLAAD), and 194–263 (STSA…LYGL). Over residues 102–117 (KRNEQENQDSCRDLDG) the composition is skewed to basic and acidic residues. Low complexity-rich tracts occupy residues 194–209 (STSASSFSSGSNGATT) and 219–230 (NNNSSINSWSRR).

Belongs to the SDE2 family. As to quaternary structure, interacts with cay1/cactin. Interacts with prp19. Interacts with cwf12. Interacts with cdc5. The N-terminal UBL (ubiquitin-like) propeptide is cleaved at Gly-84 by the deubiquitinating enzymes ubp5 and ubp15; the resulting mature sde2 associates with spliceosomes. In terms of processing, polyubiquitinated; ubiquitination is partially dependent on ubr11.

The protein localises to the cytoplasm. Its subcellular location is the nucleus. Its function is as follows. Plays a role in pre-mRNA splicing by facilitating excision of introns featuring relatively long (&gt;21 nucleotides) spacing between the branchpoint and 3'-splice site (ss). Recruits cactin to the spliceosome which may enable folding of RNA between the branchpoint and 3'-ss, to guide the splice site towards the spliceosome's catalytic center. Required for proper chromatin organization by assisting splicing of components involved in genomic stability and telomere organization. This Schizosaccharomyces pombe (strain 972 / ATCC 24843) (Fission yeast) protein is Splicing regulator sde2.